A 648-amino-acid polypeptide reads, in one-letter code: Bifunctional protein TilS/HprT (648 aa).

29-34 (SGGPDS) contacts ATP. Residue Asp627 coordinates Mg(2+).

The protein in the N-terminal section; belongs to the tRNA(Ile)-lysidine synthase family. In the C-terminal section; belongs to the purine/pyrimidine phosphoribosyltransferase family. Requires Mg(2+) as cofactor.

It localises to the cytoplasm. It catalyses the reaction IMP + diphosphate = hypoxanthine + 5-phospho-alpha-D-ribose 1-diphosphate. It carries out the reaction GMP + diphosphate = guanine + 5-phospho-alpha-D-ribose 1-diphosphate. The catalysed reaction is cytidine(34) in tRNA(Ile2) + L-lysine + ATP = lysidine(34) in tRNA(Ile2) + AMP + diphosphate + H(+). Functionally, ligates lysine onto the cytidine present at position 34 of the AUA codon-specific tRNA(Ile) that contains the anticodon CAU, in an ATP-dependent manner. Cytidine is converted to lysidine, thus changing the amino acid specificity of the tRNA from methionine to isoleucine. The chain is Bifunctional protein TilS/HprT (tilS/hprT) from Listeria monocytogenes serovar 1/2a (strain ATCC BAA-679 / EGD-e).